Reading from the N-terminus, the 446-residue chain is MTSSLPNIGFISLGCPKNLVDSERILTELRSDGYNIIPSYENADLVIVNTCGFIDSAVQESLEAIGEALEENGKVIVTGCLGAKEDRIREVHPKVLEVTGPHSYEAVMQQVHKYVPKPAYNPYVNLVPKQGVKLTPKHYAYLKISEGCDHRCTFCIIPSMRGDLDSRSITQVLDEAKRLVEAGVKEILVVSQDTSAYALDRSKEEQNKTVFWNGMPIKNNLISLCEQLGKLGVWVRLHYVYPYPHVDQLIPLMAEGKILPYLDIPLQHASPKILKAMKRPGSIERTLERIKKWREICPDLTLRSTFIVGFPGESEEDFQLLLDFLKEALLDRVGCFKFSPVEGAIATEMPDQVPEEVKEARFHRFMQLQQEISAARLQQKVGKVFTVLVDEVDEEGIIARSIADAPEIDGVVYIDNPNRVAVKAGQFIEVKITRADAYDLYASLIN.

Residues 6 to 116 enclose the MTTase N-terminal domain; that stretch reads PNIGFISLGC…VMQQVHKYVP (111 aa). [4Fe-4S] cluster is bound by residues cysteine 15, cysteine 51, cysteine 80, cysteine 148, cysteine 152, and cysteine 155. In terms of domain architecture, Radical SAM core spans 134–375; that stretch reads LTPKHYAYLK…MQLQQEISAA (242 aa). In terms of domain architecture, TRAM spans 378 to 446; that stretch reads QQKVGKVFTV…AYDLYASLIN (69 aa).

The protein belongs to the methylthiotransferase family. RimO subfamily. [4Fe-4S] cluster is required as a cofactor.

It localises to the cytoplasm. It catalyses the reaction L-aspartate(89)-[ribosomal protein uS12]-hydrogen + (sulfur carrier)-SH + AH2 + 2 S-adenosyl-L-methionine = 3-methylsulfanyl-L-aspartate(89)-[ribosomal protein uS12]-hydrogen + (sulfur carrier)-H + 5'-deoxyadenosine + L-methionine + A + S-adenosyl-L-homocysteine + 2 H(+). Its function is as follows. Catalyzes the methylthiolation of an aspartic acid residue of ribosomal protein uS12. This Pasteurella multocida (strain Pm70) protein is Ribosomal protein uS12 methylthiotransferase RimO.